A 614-amino-acid chain; its full sequence is Threonine--tRNA ligase (614 aa).

Positions 1-141 (MRLLLIHSDY…LSKTIVPGEE (141 aa)) are editing domain. A catalytic region spans residues 198–490 (AHVDLMRSKE…ISTQKVPALP (293 aa)). Zn(2+) is bound by residues Cys-290, His-342, and His-463.

Belongs to the class-II aminoacyl-tRNA synthetase family. Homodimer. Requires Zn(2+) as cofactor.

It is found in the cytoplasm. The enzyme catalyses tRNA(Thr) + L-threonine + ATP = L-threonyl-tRNA(Thr) + AMP + diphosphate + H(+). In terms of biological role, catalyzes the attachment of threonine to tRNA(Thr) in a two-step reaction: L-threonine is first activated by ATP to form Thr-AMP and then transferred to the acceptor end of tRNA(Thr). Also edits incorrectly charged L-seryl-tRNA(Thr). This Methanoregula boonei (strain DSM 21154 / JCM 14090 / 6A8) protein is Threonine--tRNA ligase.